Reading from the N-terminus, the 160-residue chain is SPbeta prophage-derived uncharacterized protein YokE (160 aa).

The chain is SPbeta prophage-derived uncharacterized protein YokE (yokE) from Bacillus subtilis (strain 168).